A 544-amino-acid chain; its full sequence is U1 small nuclear ribonucleoprotein component PRP42 (544 aa).

HAT repeat units follow at residues 7 to 39, 51 to 83, 85 to 118, 121 to 156, and 163 to 195; these read LIHD…YIVK, QLLK…LEYK, GNVS…FCNN, SHQK…QISS, and KYWN…DIMD. The Nuclear localization signal motif lies at 230-235; that stretch reads KKKLKK. 4 HAT repeats span residues 255–288, 290–322, 366–397, and 456–488; these read FESK…YTIT, QTDS…WLIN, NLLE…FKTF, and VEKN…LIYF.

Component of the 18S U1 snRNP particle, a subcomplex of the spliceosome.

It is found in the nucleus. In terms of biological role, essential component of the U1 snRNP particle, which recognizes and binds the 5'-splice site of pre-mRNA. Together with other non-snRNP factors, U1 snRNP forms the spliceosomal commitment complex, that targets pre-mRNA to the splicing pathway. U1 snRNP is cotranscriptionally recruited to intron-containing genes. Required for U1 snRNP biogenesis. This chain is U1 small nuclear ribonucleoprotein component PRP42 (PRP42), found in Saccharomyces cerevisiae (strain ATCC 204508 / S288c) (Baker's yeast).